The following is a 251-amino-acid chain: Gamma-interferon-inducible lysosomal thiol reductase (251 aa).

Residues M1–C21 form the signal peptide. Residues M22–V60 enclose the Saposin A-type domain. Cysteines 68 and 71 form a disulfide. Residue N108 is glycosylated (N-linked (GlcNAc...) asparagine).

This sequence belongs to the GILT family. In terms of assembly, dimer; disulfide-linked. Highly expressed in spleen and kidney. Also detected at lower levels in liver, heart, brain, intestine and gill.

It is found in the secreted. The protein resides in the lysosome. Its function is as follows. Lysosomal thiol reductase that can reduce protein disulfide bonds. May facilitate the complete unfolding of proteins destined for lysosomal degradation. Plays an important role in antigen processing. This Carassius auratus (Goldfish) protein is Gamma-interferon-inducible lysosomal thiol reductase.